We begin with the raw amino-acid sequence, 333 residues long: Fructose-1,6-bisphosphatase class 1 (333 aa).

4 residues coordinate Mg(2+): E92, D113, L115, and D116. Substrate-binding positions include 116-119, N209, Y242, and K272; that span reads DGSS. A Mg(2+)-binding site is contributed by E278.

Belongs to the FBPase class 1 family. As to quaternary structure, homotetramer. Mg(2+) is required as a cofactor.

The protein resides in the cytoplasm. It carries out the reaction beta-D-fructose 1,6-bisphosphate + H2O = beta-D-fructose 6-phosphate + phosphate. It participates in carbohydrate biosynthesis; Calvin cycle. This Chlorobium chlorochromatii (strain CaD3) protein is Fructose-1,6-bisphosphatase class 1.